A 64-amino-acid chain; its full sequence is Long neurotoxin MS2 (64 aa).

Disulfide bonds link cysteine 3–cysteine 24, cysteine 6–cysteine 11, cysteine 17–cysteine 41, cysteine 45–cysteine 57, and cysteine 58–cysteine 63.

Belongs to the three-finger toxin family. Ancestral subfamily. Expressed by the venom gland.

The protein resides in the secreted. Functionally, produces peripheral paralysis by blocking neuromuscular transmission at the postsynaptic site. Very weak inhibitor of the endogenous nicotinic acetylcholine receptors (nAChR) in the human rhabdomyosarcoma TE 671 cell line. Not toxic to mice by intraperitoneal injection or to zebrafish by injection at the back of the dorsolateral region. The polypeptide is Long neurotoxin MS2 (Micrurus surinamensis (Surinam coral snake)).